Consider the following 605-residue polypeptide: Mini-chromosome maintenance complex-binding protein (605 aa).

Phosphoserine occurs at positions 147 and 150.

This sequence belongs to the MCMBP family. In terms of assembly, interacts with the MCM complex.

It localises to the nucleus. Functionally, associated component of the MCM complex that acts as a regulator of DNA replication. Binds to the MCM complex during late S phase and may act by promoting the disassembly of the MCM complex from chromatin. In Drosophila melanogaster (Fruit fly), this protein is Mini-chromosome maintenance complex-binding protein.